Consider the following 242-residue polypeptide: Biosynthetic peptidoglycan transglycosylase (242 aa).

A helical membrane pass occupies residues 19 to 39; it reads LMVVLAVFWGGGIALFSVAPV.

Belongs to the glycosyltransferase 51 family.

The protein localises to the cell inner membrane. It carries out the reaction [GlcNAc-(1-&gt;4)-Mur2Ac(oyl-L-Ala-gamma-D-Glu-L-Lys-D-Ala-D-Ala)](n)-di-trans,octa-cis-undecaprenyl diphosphate + beta-D-GlcNAc-(1-&gt;4)-Mur2Ac(oyl-L-Ala-gamma-D-Glu-L-Lys-D-Ala-D-Ala)-di-trans,octa-cis-undecaprenyl diphosphate = [GlcNAc-(1-&gt;4)-Mur2Ac(oyl-L-Ala-gamma-D-Glu-L-Lys-D-Ala-D-Ala)](n+1)-di-trans,octa-cis-undecaprenyl diphosphate + di-trans,octa-cis-undecaprenyl diphosphate + H(+). It functions in the pathway cell wall biogenesis; peptidoglycan biosynthesis. Functionally, peptidoglycan polymerase that catalyzes glycan chain elongation from lipid-linked precursors. This chain is Biosynthetic peptidoglycan transglycosylase, found in Escherichia coli O17:K52:H18 (strain UMN026 / ExPEC).